We begin with the raw amino-acid sequence, 103 residues long: Large ribosomal subunit protein bL21 (103 aa).

It belongs to the bacterial ribosomal protein bL21 family. Part of the 50S ribosomal subunit. Contacts protein L20.

Functionally, this protein binds to 23S rRNA in the presence of protein L20. In Lactobacillus helveticus (strain DPC 4571), this protein is Large ribosomal subunit protein bL21.